The following is a 427-amino-acid chain: Zinc-finger homeodomain protein 7 (427 aa).

2 disordered regions span residues 1–60 (MEYK…SLMD) and 91–118 (LHAA…QRHH). Residues 10 to 28 (EEEEEEEEEEDDEEEDEEE) are compositionally biased toward acidic residues. Low complexity predominate over residues 50-60 (SSASSPSSLMD). Residues 163-211 (YRECLKNHAARMGAHVLDGCGEFMSSPGDGAAALACAACGCHRSFHRRE) form a ZF-HD dimerization-type; degenerate zinc finger. 2 disordered regions span residues 264-320 (KRPP…SKKR) and 375-427 (HLAK…QHDA). Composition is skewed to low complexity over residues 271 to 283 (VSPA…LAES) and 301 to 312 (HAAAVVAASASA). The segment at residues 318 to 381 (KKRFRTKFTA…NNKHLAKTPP (64 aa)) is a DNA-binding region (homeobox). Residues 380–401 (PPSPTSQPPPPPLHHDPSPPPP) show a composition bias toward pro residues. Positions 402–416 (PHHHHHHHHHHHPPQ) are enriched in basic residues. The span at 417–427 (HHQQQQQQHDA) shows a compositional bias: low complexity.

As to quaternary structure, homo- and heterodimer with other ZFHD proteins.

It is found in the nucleus. Its function is as follows. Putative transcription factor. The protein is Zinc-finger homeodomain protein 7 (ZHD7) of Oryza sativa subsp. japonica (Rice).